Here is a 371-residue protein sequence, read N- to C-terminus: MATPTEIAYNRAALIESLQFTFVMDEVGKHLSEVICGFGIVLNLLLIYVIFKRTPKHMRSYAVLLFNFAIFDLLTCVASLLACQKTIFSGLSLTYIFHGPCKYVSSSLCFFCHCFVCHAMAHSQWILLISFIYRYRVLVDGAPDTKKMIVIVSLFYAMSAVIFLFYFWDIGDTNDLKQIMYDLHPQYHYDDREIWGDIVVSGNTTVLTIPSLIAIFYMTMPCVPIYFIIHYFRDKTLSTLASNALSMSPATKASHQKLIMALSIQAAIPIFWLVASGIFTLAEFGIIDGPIPENITFRLMDCIPSSSPLVAFIFIAPYREGLLRIISKTGIYRKQENRVSSVVEKFNQPPKQPTNPAQQSANNDAAKTEKV.

7 consecutive transmembrane segments (helical) span residues 31–51 (LSEV…YVIF), 62–82 (AVLL…SLLA), 109–129 (CFFC…ILLI), 148–168 (MIVI…FYFW), 209–229 (IPSL…YFII), 267–287 (AIPI…FGII), and 295–315 (ITFR…FIFI). Positions 344–371 (EKFNQPPKQPTNPAQQSANNDAAKTEKV) are disordered. Residues 354–365 (TNPAQQSANNDA) are compositionally biased toward polar residues.

The protein belongs to the nematode receptor-like protein srd family.

It is found in the membrane. The sequence is that of Serpentine receptor class delta-1 (srd-1) from Caenorhabditis elegans.